The primary structure comprises 207 residues: Large ribosomal subunit protein bL25 (207 aa).

It belongs to the bacterial ribosomal protein bL25 family. CTC subfamily. In terms of assembly, part of the 50S ribosomal subunit; part of the 5S rRNA/L5/L18/L25 subcomplex. Contacts the 5S rRNA. Binds to the 5S rRNA independently of L5 and L18.

Functionally, this is one of the proteins that binds to the 5S RNA in the ribosome where it forms part of the central protuberance. In Bordetella petrii (strain ATCC BAA-461 / DSM 12804 / CCUG 43448), this protein is Large ribosomal subunit protein bL25.